Here is a 233-residue protein sequence, read N- to C-terminus: 2,3-bisphosphoglycerate-dependent phosphoglycerate mutase (233 aa).

Residues 8 to 15 (RHGESEWN), 21 to 22 (TG), Arg60, 87 to 90 (ERHY), Lys98, 114 to 115 (RR), and 183 to 184 (GN) each bind substrate. The active-site Tele-phosphohistidine intermediate is His9. Residue Glu87 is the Proton donor/acceptor of the active site.

It belongs to the phosphoglycerate mutase family. BPG-dependent PGAM subfamily.

It catalyses the reaction (2R)-2-phosphoglycerate = (2R)-3-phosphoglycerate. It functions in the pathway carbohydrate degradation; glycolysis; pyruvate from D-glyceraldehyde 3-phosphate: step 3/5. In terms of biological role, catalyzes the interconversion of 2-phosphoglycerate and 3-phosphoglycerate. In Lactococcus lactis subsp. cremoris (strain MG1363), this protein is 2,3-bisphosphoglycerate-dependent phosphoglycerate mutase.